The following is a 104-amino-acid chain: MFVDVGLLHSGANESHYAGEHAHGGADQLSRGPLLSGMFGTFPVAQTFHDAVGAAHAQQMRNLHAHRQALITVGEKARHAATGFTDMDDGNAAELKAVVCSCAT.

This is an uncharacterized protein from Mycobacterium tuberculosis (strain CDC 1551 / Oshkosh).